Reading from the N-terminus, the 220-residue chain is Dual specificity phosphatase 29 (220 aa).

Residues 1-15 (MTSGEVKTSLKNAYS) are compositionally biased toward polar residues. The interval 1 to 29 (MTSGEVKTSLKNAYSSAKRLSPKMEEEGE) is disordered. One can recognise a Tyrosine-protein phosphatase domain in the interval 54–202 (HVNEVWPKLY…LRELDKQLVQ (149 aa)). 146 to 153 (HCVMGRSR) lines the substrate pocket. The active-site Phosphocysteine intermediate is the cysteine 147.

The protein belongs to the protein-tyrosine phosphatase family. Non-receptor class dual specificity subfamily. Homodimer. Interacts with PRKAA2.

The protein resides in the cytoplasm. The protein localises to the nucleus. The enzyme catalyses O-phospho-L-tyrosyl-[protein] + H2O = L-tyrosyl-[protein] + phosphate. It carries out the reaction O-phospho-L-seryl-[protein] + H2O = L-seryl-[protein] + phosphate. It catalyses the reaction O-phospho-L-threonyl-[protein] + H2O = L-threonyl-[protein] + phosphate. Functionally, dual specificity phosphatase able to dephosphorylate phosphotyrosine, phosphoserine and phosphothreonine residues within the same substrate, with a preference for phosphotyrosine as a substrate. Involved in the modulation of intracellular signaling cascades. In skeletal muscle regulates systemic glucose homeostasis by activating, AMPK, an energy sensor protein kinase. Affects MAP kinase signaling though modulation of the MAPK1/2 cascade in skeletal muscle promoting muscle cell differentiation, development and atrophy. The polypeptide is Dual specificity phosphatase 29 (Homo sapiens (Human)).